Here is a 1018-residue protein sequence, read N- to C-terminus: Cytadherence high molecular weight protein 1 (1018 aa).

2 coiled-coil regions span residues 782 to 815 (NRFL…AKDL) and 849 to 880 (ELVR…AVYK).

Post-translationally, phosphorylated mainly on serine residues.

Its subcellular location is the cell projection. It localises to the attachment organelle membrane. Functionally, component of the cytoskeleton-like structure which stabilizes the shape of the wall-less Mycoplasma. This cytoskeleton-like network of accessory proteins containing HMW proteins 1 to 5 allows the proper anchoring of cytadhesin proteins in the mycoplasmal membrane at the attachment organelle. The polypeptide is Cytadherence high molecular weight protein 1 (hmw1) (Mycoplasma pneumoniae (strain ATCC 29342 / M129 / Subtype 1) (Mycoplasmoides pneumoniae)).